Reading from the N-terminus, the 246-residue chain is Ly6/PLAUR domain-containing protein 4 (246 aa).

Positions 1–26 are cleaved as a signal peptide; that stretch reads MGPQHLRLVQLFCLLGAISTLPRAGA. N-linked (GlcNAc...) asparagine glycosylation is present at Asn-117. A UPAR/Ly6 domain is found at 142–223; the sequence is CPTCVGEHMK…LNILEKSQIV (82 aa). The GPI-anchor amidated alanine moiety is linked to residue Ala-225. The propeptide at 226-246 is removed in mature form; that stretch reads ASSRQDPAWGVVLGLLFAFRD.

It localises to the cell membrane. In Homo sapiens (Human), this protein is Ly6/PLAUR domain-containing protein 4 (LYPD4).